We begin with the raw amino-acid sequence, 269 residues long: MVMSQGTYTFLTCFAGFWLIWGLIVLLCCFCSFLRRRLKRRQEERLREQNLRALELEPLELEGSLAGSPPGLAPPPPPHRSRLEAPVHAHSHVHVHPLLHHGPAQPHAHPHPHHHALPHPPPSHLSVPPRPWSYPRQAESDMSKPPCYEEAVLMAEPPPPYSEVLTDTRGLYRKIVTPFLSRRDSAEKQEQPPPSYKPLFLDRGYTSALHLPSAPRPAAPCPALCLQADRSRRVFPSWTDSELSSREPLEHGAWRLPVSIPLFGRTTAV.

Residues 1 to 9 (MVMSQGTYT) are Extracellular-facing. Residues 1–44 (MVMSQGTYTFLTCFAGFWLIWGLIVLLCCFCSFLRRRLKRRQEE) form a required for interaction with NMDA receptors region. Positions 2 to 39 (VMSQGTYTFLTCFAGFWLIWGLIVLLCCFCSFLRRRLK) are required for membrane localization. Residues 10 to 30 (FLTCFAGFWLIWGLIVLLCCF) form a helical; Signal-anchor for type III membrane protein membrane-spanning segment. At 31 to 269 (CSFLRRRLKR…IPLFGRTTAV (239 aa)) the chain is on the cytoplasmic side. Phosphoserine is present on Ser-64. Disordered regions lie at residues 64-83 (SLAG…RSRL) and 98-128 (LLHH…LSVP). The span at 108-117 (AHPHPHHHAL) shows a compositional bias: basic residues. A compositionally biased stretch (pro residues) spans 118–128 (PHPPPSHLSVP). The tract at residues 146 to 166 (PCYEEAVLMAEPPPPYSEVLT) is required for internalization. A required for apoptosis induction region spans residues 146–269 (PCYEEAVLMA…IPLFGRTTAV (124 aa)). Residues 267–269 (TAV) carry the PDZ-binding motif.

As to quaternary structure, forms a complex with NMDA receptor zeta subunit GRIN1 and epsilon subunit GRIN2B. Interacts with GRIN2B. Interacts with GRIN1; the interaction is reduced upon NMDA receptor activity. Found in a postsynaptic membrane complex with DLG4 and GRIN1. Interacts with DLG4 (via PDZ3 domain and to lesser degree via PDZ2 domain). Interacts with FBXW7. Found in a complex with JUN and FBXW7. Interacts with JUN and FBXW7; the interaction inhibits ubiquitination-mediated JUN degradation promoting its phosphorylation and transcriptional activity. Interacts with SRC. Palmitoylated. Post-translationally, tyrosine phosphorylated, possibly by SRC. As to expression, expressed in brain. Expressed in the cerebral cortex and especially in hippocampal neural cells (at protein level).

The protein localises to the cell membrane. It localises to the postsynaptic cell membrane. Its subcellular location is the postsynaptic density membrane. The protein resides in the cytoplasm. It is found in the perinuclear region. The protein localises to the synapse. It localises to the cell projection. Its subcellular location is the dendrite. The protein resides in the nucleus. Its function is as follows. Acts as a synapse-to-nucleus messenger to promote NMDA receptor-mediated excitotoxicity in neurons in a JUN-dependent manner. Inhibits ubiquitination-mediated degradation and promotes phosphorylation and transcriptional activity of transcription factor JUN. Might play a redundant role in the regulation of T cell receptor signaling. Might promote apoptosis in T cells. This is Proline-rich protein 7 (Prr7) from Rattus norvegicus (Rat).